A 1491-amino-acid chain; its full sequence is Pleckstrin homology domain-containing family H member 2 (1491 aa).

The stretch at 19 to 177 (ALEAQLMKFR…ELQEKKISCV (159 aa)) forms a coiled coil. Disordered regions lie at residues 232 to 435 (AEKP…PFQP), 506 to 546 (DDGL…LHRF), and 612 to 668 (SSSP…SDYA). Polar residues predominate over residues 253-264 (TSCSSEQNQKTR). The span at 374–385 (KEQDSSSDELNK) shows a compositional bias: basic and acidic residues. The segment covering 392–406 (LDYTSSSSEANTPSP) has biased composition (polar residues). Low complexity predominate over residues 657-666 (SDSSAASESD). 2 PH domains span residues 702–796 (PLEK…SVLR) and 810–918 (KPAV…VAAG). The 156-residue stretch at 954–1109 (HSKEGILSPL…PSRMEILSTL (156 aa)) folds into the MyTH4 domain. Positions 1120 to 1449 (FSIPVHFMNG…SYINSFHQQK (330 aa)) constitute an FERM domain. Residues 1466–1491 (QAPQARVMGSQPPLSNSRPTKGPTLL) are disordered.

In terms of assembly, self-associates. Interacts with TGFB1I1. In terms of tissue distribution, expressed in the kidney and testis. Expressed in the kidney exclusively by glomerular podocytes.

The protein resides in the cytoplasm. It localises to the cytoskeleton. Its subcellular location is the cell membrane. The protein localises to the cell projection. It is found in the lamellipodium. Its function is as follows. In the kidney glomerulus may play a role in linking podocyte foot processes to the glomerular basement membrane. May be involved in stabilization of F-actin by attenuating its depolymerization. Can recruit TGFB1I1 from focal adhesions to podocyte lamellipodia. This is Pleckstrin homology domain-containing family H member 2 (Plekhh2) from Mus musculus (Mouse).